The primary structure comprises 177 residues: ATP-dependent protease subunit HslV (177 aa).

Residue T2 is part of the active site. G158, C161, and T164 together coordinate Na(+).

It belongs to the peptidase T1B family. HslV subfamily. As to quaternary structure, a double ring-shaped homohexamer of HslV is capped on each side by a ring-shaped HslU homohexamer. The assembly of the HslU/HslV complex is dependent on binding of ATP.

The protein resides in the cytoplasm. The enzyme catalyses ATP-dependent cleavage of peptide bonds with broad specificity.. Its activity is regulated as follows. Allosterically activated by HslU binding. Protease subunit of a proteasome-like degradation complex believed to be a general protein degrading machinery. The polypeptide is ATP-dependent protease subunit HslV (Pseudomonas aeruginosa (strain LESB58)).